Here is a 62-residue protein sequence, read N- to C-terminus: Protein DsrB (62 aa).

It belongs to the DsrB family.

The polypeptide is Protein DsrB (Shigella flexneri serotype 5b (strain 8401)).